A 475-amino-acid polypeptide reads, in one-letter code: Isocitrate dehydrogenase [NADP] (475 aa).

An NADP(+)-binding site is contributed by threonine 104. Residues serine 113, asparagine 115, arginine 119, arginine 129, and arginine 153 each coordinate D-threo-isocitrate. Residue aspartate 362 participates in Mg(2+) binding. NADP(+)-binding positions include 394–400 (HGTAPKH), asparagine 407, tyrosine 446, and arginine 450.

The protein belongs to the isocitrate and isopropylmalate dehydrogenases family. As to quaternary structure, homodimer. Mg(2+) serves as cofactor. It depends on Mn(2+) as a cofactor.

The protein resides in the cytoplasm. The catalysed reaction is D-threo-isocitrate + NADP(+) = 2-oxoglutarate + CO2 + NADPH. Inhibited non-competitively by ADP and 2-oxoglutarate, with respect to isocitrate and in a competitive manner by NADPH. Its function is as follows. Catalyzes the oxidative decarboxylation of isocitrate to 2-oxoglutarate and carbon dioxide with the concomitant reduction of NADP(+). Is specific for NADP(+), cannot use NAD(+). The sequence is that of Isocitrate dehydrogenase [NADP] from Synechocystis sp. (strain ATCC 27184 / PCC 6803 / Kazusa).